The primary structure comprises 234 residues: Large ribosomal subunit protein uL1 (234 aa).

Belongs to the universal ribosomal protein uL1 family. In terms of assembly, part of the 50S ribosomal subunit.

In terms of biological role, binds directly to 23S rRNA. The L1 stalk is quite mobile in the ribosome, and is involved in E site tRNA release. Protein L1 is also a translational repressor protein, it controls the translation of the L11 operon by binding to its mRNA. The polypeptide is Large ribosomal subunit protein uL1 (Aliivibrio salmonicida (strain LFI1238) (Vibrio salmonicida (strain LFI1238))).